The chain runs to 355 residues: Anhydro-N-acetylmuramic acid kinase (355 aa).

An ATP-binding site is contributed by 9–16; sequence GTSLDGVD.

Belongs to the anhydro-N-acetylmuramic acid kinase family.

The enzyme catalyses 1,6-anhydro-N-acetyl-beta-muramate + ATP + H2O = N-acetyl-D-muramate 6-phosphate + ADP + H(+). It functions in the pathway amino-sugar metabolism; 1,6-anhydro-N-acetylmuramate degradation. The protein operates within cell wall biogenesis; peptidoglycan recycling. Functionally, catalyzes the specific phosphorylation of 1,6-anhydro-N-acetylmuramic acid (anhMurNAc) with the simultaneous cleavage of the 1,6-anhydro ring, generating MurNAc-6-P. Is required for the utilization of anhMurNAc either imported from the medium or derived from its own cell wall murein, and thus plays a role in cell wall recycling. The polypeptide is Anhydro-N-acetylmuramic acid kinase (Paramagnetospirillum magneticum (strain ATCC 700264 / AMB-1) (Magnetospirillum magneticum)).